The following is a 310-amino-acid chain: Coproporphyrin III ferrochelatase (310 aa).

Position 13 (Tyr13) interacts with Fe-coproporphyrin III. An N-methylmesoporphyrin-binding site is contributed by Tyr13. Residue Glu20 participates in Mg(2+) binding. Arg30 contacts Fe-coproporphyrin III. Residue 31 to 33 (RGR) participates in N-methylmesoporphyrin binding. Arg46 contributes to the Mg(2+) binding site. Residues 46–47 (RY), Ser54, and Tyr125 each bind Fe-coproporphyrin III. Positions 183 and 188 each coordinate N-methylmesoporphyrin. His183 is a binding site for Fe(2+). A Fe(2+)-binding site is contributed by Glu264. Mg(2+)-binding residues include Asp268 and Glu272.

It belongs to the ferrochelatase family. Monomer. Interacts with frataxin/Fra.

The protein resides in the cytoplasm. It catalyses the reaction Fe-coproporphyrin III + 2 H(+) = coproporphyrin III + Fe(2+). Its pathway is porphyrin-containing compound metabolism; protoheme biosynthesis. With respect to regulation, stimulated by Mg(2+). Inhibited by Cd(2+). Inhibited by N-methylmesoporphyrin (N-MeMP) and 2,4-disulfonic acid deuteroporphyrin IX (dSDP). In terms of biological role, involved in coproporphyrin-dependent heme b biosynthesis. Catalyzes the insertion of ferrous iron into coproporphyrin III to form Fe-coproporphyrin III. It can also insert iron into protoporphyrin IX. Has weaker activity with 2,4 disulfonate, deuteroporphyrin and 2,4 hydroxyethyl. In vitro, can also use Zn(2+) or Cu(2+). The chain is Coproporphyrin III ferrochelatase from Bacillus subtilis (strain 168).